The sequence spans 426 residues: Pyruvate, phosphate dikinase regulatory protein, chloroplastic (426 aa).

Residues 1–41 (MIGCAKPLAAPLQAWARPPSPAGRRLPPSFCAPDTSPALTR) constitute a chloroplast transit peptide. Disordered regions lie at residues 1–76 (MIGC…HLDR) and 94–124 (AALS…DGED). Positions 94-119 (AALSSASVSAPPVIKSPRPEDAAVAA) are enriched in low complexity. 153-160 (HSVNAALG) lines the ADP pocket.

The protein belongs to the pyruvate, phosphate/water dikinase regulatory protein family. PDRP subfamily. In terms of assembly, homodimer at pH 7.5 and homotetramer at pH 8.3. It depends on Mg(2+) as a cofactor. As to expression, leaf mesophyll-cells.

It localises to the plastid. It is found in the chloroplast stroma. The enzyme catalyses N(tele)-phospho-L-histidyl/L-threonyl-[pyruvate, phosphate dikinase] + ADP = N(tele)-phospho-L-histidyl/O-phospho-L-threonyl-[pyruvate, phosphate dikinase] + AMP + H(+). The catalysed reaction is N(tele)-phospho-L-histidyl/O-phospho-L-threonyl-[pyruvate, phosphate dikinase] + phosphate + H(+) = N(tele)-phospho-L-histidyl/L-threonyl-[pyruvate, phosphate dikinase] + diphosphate. The protein operates within photosynthesis; C4 acid pathway. Regulated by light/dark exposure. Its function is as follows. Bifunctional serine/threonine kinase and phosphorylase involved in the dark/light-mediated regulation of PPDK by catalyzing its phosphorylation/dephosphorylation. Dark/light-induced changes in stromal concentrations of the competing ADP and Pi substrates govern the direction of the reaction. In the dark, phosphorylates the catalytic intermediate of PPDK (PPDK-HisP), inactivating it. Light exposure induces the phosphorolysis reaction that reactivates PPDK. Phosphorylates PPDK at both Ser-528 and Thr-527. Can use ADP as a high specificity substrate and GDP as a lower affinity substrate, but has no activity with UDP. This chain is Pyruvate, phosphate dikinase regulatory protein, chloroplastic (PDRP1), found in Zea mays (Maize).